Consider the following 233-residue polypeptide: Metallo-beta-lactamase domain-containing protein 1 (233 aa).

The Zn(2+) site is built by His96, His98, Asp100, His101, His152, Asp174, and His213.

Belongs to the metallo-beta-lactamase superfamily. Glyoxalase II family. As to quaternary structure, homodimer. Zn(2+) serves as cofactor.

It is found in the cytoplasm. Its subcellular location is the cytosol. It localises to the nucleus. The enzyme catalyses a ribonucleotidyl-ribonucleotide-RNA + H2O = a 3'-end ribonucleotide-RNA + a 5'-end 5'-phospho-ribonucleoside-RNA + H(+). Functionally, endoribonuclease that catalyzes the hydrolysis of histone-coding pre-mRNA 3'-end. Involved in histone pre-mRNA processing during the S-phase of the cell cycle, which is required for entering/progressing through S-phase. Cleaves histone pre-mRNA at a major and a minor cleavage site after the 5'-ACCCA-3' and the 5'-ACCCACA-3' sequence, respectively, and located downstream of the stem-loop. May require the presence of the HDE element located at the histone pre-RNA 3'-end to avoid non-specific cleavage. This is Metallo-beta-lactamase domain-containing protein 1 (mblac1) from Xenopus laevis (African clawed frog).